The chain runs to 116 residues: Staphylococcal complement inhibitor (116 aa).

A signal peptide spans 1-31 (MKIRKSILAGTLAIVLASPLVTNLDKNEAQA). The segment at 62-79 (LATGSLNTYYKRTIKISG) is essential for activity.

This sequence belongs to the SCIN family.

It is found in the secreted. Involved in countering the first line of host defense mechanisms. Efficiently inhibits opsonization, phagocytosis and killing of S.aureus by human neutrophils. Acts by binding and stabilizing human C3 convertases (C4b2a and C3bBb), leading to their inactivation. The convertases are no longer able to cleave complement C3, therefore preventing further C3b deposition on the bacterial surface and phagocytosis of the bacterium. Also prevents C5a-induced neutrophil responses. The protein is Staphylococcal complement inhibitor (scn) of Staphylococcus aureus (strain Mu50 / ATCC 700699).